The sequence spans 251 residues: Large ribosomal subunit protein uL16m (251 aa).

A mitochondrion-targeting transit peptide spans Met-1–Gly-29.

It belongs to the universal ribosomal protein uL16 family. In terms of assembly, component of the mitochondrial ribosome large subunit (39S) which comprises a 16S rRNA and about 50 distinct proteins.

Its subcellular location is the mitochondrion. This chain is Large ribosomal subunit protein uL16m (Mrpl16), found in Rattus norvegicus (Rat).